Consider the following 506-residue polypeptide: Methylthioalkylmalate synthase 1, chloroplastic (506 aa).

Residues 1-49 (MASSLLTSSVMIPTTGSTVVGRSVLPFQSSLHSLRLTHSYKNPALFISC) constitute a chloroplast transit peptide. The Pyruvate carboxyltransferase domain maps to 85-359 (VRVFDTTLRD…YTKIDTRQIM (275 aa)). Ser-98 carries the phosphoserine modification.

It belongs to the alpha-IPM synthase/homocitrate synthase family. Monomer. Mn(2+) is required as a cofactor. In terms of tissue distribution, highly expressed in leaves, flowers, roots and siliques. Not detected in flowers in PubMed:12432038.

It localises to the plastid. The protein resides in the chloroplast. The catalysed reaction is an omega-(methylsulfanyl)-2-oxoalkanoate + acetyl-CoA + H2O = a 2-(omega-methylsulfanyl)alkylmalate + CoA + H(+). Its activity is regulated as follows. 1 mM DTT required for activity. Activated by ATP and inhibited by iodoacetamide. Functionally, determines the side chain length of aliphatic glucosinolate structures. Catalyzes exclusively the condensation reactions of both the first and second methionine carbon chain elongation. This chain is Methylthioalkylmalate synthase 1, chloroplastic (MAM1), found in Arabidopsis thaliana (Mouse-ear cress).